Reading from the N-terminus, the 260-residue chain is Scytalidopepsin B (260 aa).

A signal peptide spans Met-1–Ala-20. The propeptide occupies Ala-21–Ala-54. A disulfide bridge connects residues Cys-101 and Cys-181. Catalysis depends on Glu-190, which acts as the Proton acceptor. Intrachain disulfides connect Cys-195–Cys-219 and Cys-248–Cys-257.

It belongs to the peptidase G1 family. In terms of assembly, monomer.

It carries out the reaction Hydrolysis of proteins with broad specificity, cleaving 24-Phe-|-Phe-25, but not 15-Leu-|-Tyr-16 and 25-Phe-|-Tyr-26 in the B chain of insulin.. This is Scytalidopepsin B from Scytalidium lignicola (Hyphomycete).